Reading from the N-terminus, the 77-residue chain is NAD(P)H-quinone oxidoreductase subunit L (77 aa).

Helical transmembrane passes span 10–30 (LLIATLYLSLSVTYLLVLPAG) and 48–68 (LVMYFFVFFLFPGMLLLSPFL).

The protein belongs to the complex I NdhL subunit family. As to quaternary structure, NDH-1 can be composed of about 15 different subunits; different subcomplexes with different compositions have been identified which probably have different functions.

It is found in the cellular thylakoid membrane. The enzyme catalyses a plastoquinone + NADH + (n+1) H(+)(in) = a plastoquinol + NAD(+) + n H(+)(out). It catalyses the reaction a plastoquinone + NADPH + (n+1) H(+)(in) = a plastoquinol + NADP(+) + n H(+)(out). In terms of biological role, NDH-1 shuttles electrons from an unknown electron donor, via FMN and iron-sulfur (Fe-S) centers, to quinones in the respiratory and/or the photosynthetic chain. The immediate electron acceptor for the enzyme in this species is believed to be plastoquinone. Couples the redox reaction to proton translocation, and thus conserves the redox energy in a proton gradient. Cyanobacterial NDH-1 also plays a role in inorganic carbon-concentration. In Picosynechococcus sp. (strain ATCC 27264 / PCC 7002 / PR-6) (Agmenellum quadruplicatum), this protein is NAD(P)H-quinone oxidoreductase subunit L.